The following is a 284-amino-acid chain: Tropomyosin Tod p 1.0102 (284 aa).

A coiled-coil region spans residues 15 to 273 (KEVATDKAEQ…KERYKSISDE (259 aa)). The disordered stretch occupies residues 103 to 136 (EERLTSAQSKLEDASKAADESERGRKVLENRSQG).

Belongs to the tropomyosin family. In terms of assembly, homodimer. In terms of processing, the N-terminus is blocked. As to expression, expressed in mantle muscle (at protein level).

Tropomyosin, in association with the troponin complex, plays a central role in the calcium dependent regulation of muscle contraction. This Todarodes pacificus (Japanese flying squid) protein is Tropomyosin Tod p 1.0102.